The chain runs to 767 residues: Granule-bound starch synthase 2, chloroplastic/amyloplastic (767 aa).

The transit peptide at 1–45 directs the protein to the chloroplast; sequence MENSILLHSGNQFHPNLPLLALRPKKLSLIHGSSREQMWRIKRVK. 2 disordered regions span residues 160-204 and 226-268; these read KRDL…SSQE and YMPS…EKPP. Positions 172–188 are enriched in low complexity; that stretch reads SRSSITASSQISSTVSS. Over residues 230–245 the composition is skewed to basic and acidic residues; sequence LRKESSASHVEQRNEN. Over residues 253–262 the composition is skewed to acidic residues; the sequence is ANEETEDPVN. An ADP-alpha-D-glucose-binding site is contributed by lysine 290.

The protein belongs to the glycosyltransferase 1 family. Bacterial/plant glycogen synthase subfamily.

It localises to the plastid. It is found in the chloroplast. The protein resides in the amyloplast. It carries out the reaction [(1-&gt;4)-alpha-D-glucosyl](n) + ADP-alpha-D-glucose = [(1-&gt;4)-alpha-D-glucosyl](n+1) + ADP + H(+). It functions in the pathway glycan biosynthesis; starch biosynthesis. In terms of biological role, accounts for only 10 to 15% of the total soluble starch synthase activity in tubers. This is Granule-bound starch synthase 2, chloroplastic/amyloplastic (SS2) from Solanum tuberosum (Potato).